The sequence spans 89 residues: UPF0223 protein BCB4264_A4064 (89 aa).

It belongs to the UPF0223 family.

The protein is UPF0223 protein BCB4264_A4064 of Bacillus cereus (strain B4264).